We begin with the raw amino-acid sequence, 258 residues long: Indole-3-glycerol phosphate synthase (258 aa).

Belongs to the TrpC family.

The catalysed reaction is 1-(2-carboxyphenylamino)-1-deoxy-D-ribulose 5-phosphate + H(+) = (1S,2R)-1-C-(indol-3-yl)glycerol 3-phosphate + CO2 + H2O. It participates in amino-acid biosynthesis; L-tryptophan biosynthesis; L-tryptophan from chorismate: step 4/5. This is Indole-3-glycerol phosphate synthase from Campylobacter jejuni subsp. doylei (strain ATCC BAA-1458 / RM4099 / 269.97).